Reading from the N-terminus, the 330-residue chain is Methionyl-tRNA formyltransferase (330 aa).

Ser-121–Pro-124 is a binding site for (6S)-5,6,7,8-tetrahydrofolate.

This sequence belongs to the Fmt family.

It catalyses the reaction L-methionyl-tRNA(fMet) + (6R)-10-formyltetrahydrofolate = N-formyl-L-methionyl-tRNA(fMet) + (6S)-5,6,7,8-tetrahydrofolate + H(+). In terms of biological role, attaches a formyl group to the free amino group of methionyl-tRNA(fMet). The formyl group appears to play a dual role in the initiator identity of N-formylmethionyl-tRNA by promoting its recognition by IF2 and preventing the misappropriation of this tRNA by the elongation apparatus. This is Methionyl-tRNA formyltransferase from Burkholderia orbicola (strain MC0-3).